Here is a 341-residue protein sequence, read N- to C-terminus: Glycerol-3-phosphate dehydrogenase [NAD(P)+] 1 (341 aa).

The NADPH site is built by serine 11, tryptophan 12, arginine 32, arginine 33, and lysine 106. Residues lysine 106, glycine 137, and serine 139 each contribute to the sn-glycerol 3-phosphate site. Alanine 141 contacts NADPH. Positions 192, 245, 255, 256, and 257 each coordinate sn-glycerol 3-phosphate. Lysine 192 functions as the Proton acceptor in the catalytic mechanism. Residue arginine 256 coordinates NADPH. NADPH-binding residues include valine 280 and glutamate 282.

The protein belongs to the NAD-dependent glycerol-3-phosphate dehydrogenase family.

The protein localises to the cytoplasm. The catalysed reaction is sn-glycerol 3-phosphate + NAD(+) = dihydroxyacetone phosphate + NADH + H(+). It catalyses the reaction sn-glycerol 3-phosphate + NADP(+) = dihydroxyacetone phosphate + NADPH + H(+). It functions in the pathway membrane lipid metabolism; glycerophospholipid metabolism. Catalyzes the reduction of the glycolytic intermediate dihydroxyacetone phosphate (DHAP) to sn-glycerol 3-phosphate (G3P), the key precursor for phospholipid synthesis. The sequence is that of Glycerol-3-phosphate dehydrogenase [NAD(P)+] 1 from Salinibacter ruber (strain DSM 13855 / M31).